We begin with the raw amino-acid sequence, 297 residues long: PDZ domain-containing protein GIPC3 (297 aa).

Residues 97-177 (EVEVTKTEDA…SQPFTLRLVQ (81 aa)) form the PDZ domain.

Belongs to the GIPC family. Expressed in adult lung, brain and testis. In the inner ear, it is expressed in the inner and outer hair cells of the organ of Corti. Also expressed in cochlear spiral ganglion neurons.

In terms of biological role, required for postnatal maturation of the hair bundle and long-term survival of hair cells and spiral ganglion. The sequence is that of PDZ domain-containing protein GIPC3 (Gipc3) from Mus musculus (Mouse).